Reading from the N-terminus, the 411-residue chain is Arginase (411 aa).

A disordered region spans residues 83–106 (NNYINNNDNNNDNNNDNNNDNNNN). The Mn(2+) site is built by His-193, Asp-216, His-218, and Asp-220. Residues Asn-222, Ser-229, and Asp-274 each contribute to the L-arginine site. Residues Asp-323 and Asp-325 each contribute to the Mn(2+) site.

The protein belongs to the arginase family. In terms of assembly, homotrimer; oligomerization is dependent on Mn(2+) binding. The cofactor is Mn(2+).

The catalysed reaction is L-arginine + H2O = urea + L-ornithine. Its pathway is nitrogen metabolism; urea cycle; L-ornithine and urea from L-arginine: step 1/1. Feedback inhibition by product L-ornithine,. Inhibited by 2(S)-amino-6-boronohexanoic acid (ABH); however, with less efficiency than human ARG1. Its function is as follows. Catalyzes the hydrolysis of L-arginine into urea and L-ornithine, which is a precursor for polyamine biosynthesis. May play a role in parasite intra-hepatic development during the host liver stage. The polypeptide is Arginase (Plasmodium falciparum (isolate 3D7)).